Consider the following 351-residue polypeptide: tRNA uridine(34) hydroxylase (351 aa).

Positions 146-240 (DDPQALFVDM…YARRAREQGL (95 aa)) constitute a Rhodanese domain. Cys-200 functions as the Cysteine persulfide intermediate in the catalytic mechanism.

This sequence belongs to the TrhO family.

It carries out the reaction uridine(34) in tRNA + AH2 + O2 = 5-hydroxyuridine(34) in tRNA + A + H2O. In terms of biological role, catalyzes oxygen-dependent 5-hydroxyuridine (ho5U) modification at position 34 in tRNAs. In Sodalis glossinidius (strain morsitans), this protein is tRNA uridine(34) hydroxylase.